The primary structure comprises 312 residues: MTIKLKCLSHTPLRGLNDPGADVVAEVDAVLARSRAEVEAFDPELIVIFAPDHYNGLFYDLMPPFVIATAAESVADYGTLPGPLSIPRDLALDLTRHILDSGLDIALSHRLQVDHGCTQTLEELTGSLTRYPVIPIIINSVAPPFAPYRRIRKLGEAVGRFVASLGKRVLILGTGGLSHEPPVPLLSGAAEEIAEFLIAGRNPTPEARAARQARTIAAGKIYGTAESPLTPLNTDWDLAFIDLLVQGRLAEIDDFVVEEISTTAGRSTHEIRTWVAAFAALAAGGAYRARQDYYRPINEWIAGYGVVSAERR.

His-115 serves as the catalytic Proton donor. Catalysis depends on His-179, which acts as the Proton acceptor.

This sequence belongs to the LigB/MhpB extradiol dioxygenase family. Homotetramer. Fe(2+) is required as a cofactor.

It catalyses the reaction 3-(2,3-dihydroxyphenyl)propanoate + O2 = (2Z,4E)-2-hydroxy-6-oxonona-2,4-dienedioate + H(+). It carries out the reaction (2E)-3-(2,3-dihydroxyphenyl)prop-2-enoate + O2 = (2Z,4E,7E)-2-hydroxy-6-oxonona-2,4,7-trienedioate + H(+). It functions in the pathway aromatic compound metabolism; 3-phenylpropanoate degradation. Functionally, catalyzes the non-heme iron(II)-dependent oxidative cleavage of 2,3-dihydroxyphenylpropionic acid and 2,3-dihydroxicinnamic acid into 2-hydroxy-6-ketononadienedioate and 2-hydroxy-6-ketononatrienedioate, respectively. In Azotobacter vinelandii (strain DJ / ATCC BAA-1303), this protein is 2,3-dihydroxyphenylpropionate/2,3-dihydroxicinnamic acid 1,2-dioxygenase.